Reading from the N-terminus, the 279-residue chain is NAD kinase (279 aa).

Asp57 functions as the Proton acceptor in the catalytic mechanism. Residues 57–58 (DG), 133–134 (NE), Arg159, Asp161, and 172–177 (TAYNKS) contribute to the NAD(+) site.

Belongs to the NAD kinase family. A divalent metal cation serves as cofactor.

The protein localises to the cytoplasm. It catalyses the reaction NAD(+) + ATP = ADP + NADP(+) + H(+). Involved in the regulation of the intracellular balance of NAD and NADP, and is a key enzyme in the biosynthesis of NADP. Catalyzes specifically the phosphorylation on 2'-hydroxyl of the adenosine moiety of NAD to yield NADP. This chain is NAD kinase, found in Streptococcus pyogenes serotype M12 (strain MGAS2096).